Here is a 65-residue protein sequence, read N- to C-terminus: MALPKNLIPMPRSRFLRVKCIDCGNEQIVFSNPATTVRCLVCGATLVEPTGGKGVIKAKILEVLE.

4 residues coordinate Zn(2+): cysteine 20, cysteine 23, cysteine 39, and cysteine 42. The C4-type zinc finger occupies 20-42; the sequence is CIDCGNEQIVFSNPATTVRCLVC.

This sequence belongs to the eukaryotic ribosomal protein eS27 family. As to quaternary structure, part of the 30S ribosomal subunit. It depends on Zn(2+) as a cofactor.

In Thermococcus onnurineus (strain NA1), this protein is Small ribosomal subunit protein eS27.